We begin with the raw amino-acid sequence, 245 residues long: 1-(5-phosphoribosyl)-5-[(5-phosphoribosylamino)methylideneamino] imidazole-4-carboxamide isomerase (245 aa).

Asp-7 (proton acceptor) is an active-site residue. Asp-129 functions as the Proton donor in the catalytic mechanism.

This sequence belongs to the HisA/HisF family.

It localises to the cytoplasm. It carries out the reaction 1-(5-phospho-beta-D-ribosyl)-5-[(5-phospho-beta-D-ribosylamino)methylideneamino]imidazole-4-carboxamide = 5-[(5-phospho-1-deoxy-D-ribulos-1-ylimino)methylamino]-1-(5-phospho-beta-D-ribosyl)imidazole-4-carboxamide. It participates in amino-acid biosynthesis; L-histidine biosynthesis; L-histidine from 5-phospho-alpha-D-ribose 1-diphosphate: step 4/9. The protein is 1-(5-phosphoribosyl)-5-[(5-phosphoribosylamino)methylideneamino] imidazole-4-carboxamide isomerase of Aliivibrio fischeri (strain MJ11) (Vibrio fischeri).